The chain runs to 390 residues: Putative nickel insertion protein (390 aa).

The protein belongs to the LarC family.

The polypeptide is Putative nickel insertion protein (Geotalea uraniireducens (strain Rf4) (Geobacter uraniireducens)).